Here is a 384-residue protein sequence, read N- to C-terminus: UDP-N-acetylglucosamine--N-acetylmuramyl-(pentapeptide) pyrophosphoryl-undecaprenol N-acetylglucosamine transferase (384 aa).

UDP-N-acetyl-alpha-D-glucosamine contacts are provided by residues Thr-17–Gly-19, Asn-131, Arg-172, Ser-200, and Gln-301.

Belongs to the glycosyltransferase 28 family. MurG subfamily.

Its subcellular location is the cell inner membrane. It carries out the reaction di-trans,octa-cis-undecaprenyl diphospho-N-acetyl-alpha-D-muramoyl-L-alanyl-D-glutamyl-meso-2,6-diaminopimeloyl-D-alanyl-D-alanine + UDP-N-acetyl-alpha-D-glucosamine = di-trans,octa-cis-undecaprenyl diphospho-[N-acetyl-alpha-D-glucosaminyl-(1-&gt;4)]-N-acetyl-alpha-D-muramoyl-L-alanyl-D-glutamyl-meso-2,6-diaminopimeloyl-D-alanyl-D-alanine + UDP + H(+). It functions in the pathway cell wall biogenesis; peptidoglycan biosynthesis. Functionally, cell wall formation. Catalyzes the transfer of a GlcNAc subunit on undecaprenyl-pyrophosphoryl-MurNAc-pentapeptide (lipid intermediate I) to form undecaprenyl-pyrophosphoryl-MurNAc-(pentapeptide)GlcNAc (lipid intermediate II). The sequence is that of UDP-N-acetylglucosamine--N-acetylmuramyl-(pentapeptide) pyrophosphoryl-undecaprenol N-acetylglucosamine transferase from Granulibacter bethesdensis (strain ATCC BAA-1260 / CGDNIH1).